The following is a 287-amino-acid chain: 2' cyclic ADP-D-ribose synthase BtTIR (287 aa).

A TIR domain is found at 155–287; it reads KQYDFFISHA…DDIVENLKNL (133 aa). E230 is an active-site residue.

Homodimer.

The enzyme catalyses NAD(+) = 2'cADPR + nicotinamide + H(+). In terms of biological role, NAD(+) hydrolase (NADase) that cleaves NAD(+) into nicotinamide and 2' cyclic ADP-D-ribose (2'cADPR). This chain is 2' cyclic ADP-D-ribose synthase BtTIR, found in Bacteroides thetaiotaomicron.